Reading from the N-terminus, the 262-residue chain is Polyamine aminopropyltransferase (262 aa).

In terms of domain architecture, PABS spans Met1–Pro249. Asn29 serves as a coordination point for S-methyl-5'-thioadenosine. Residue Asp83 coordinates spermidine. Residue Asp155 is the Proton acceptor of the active site.

The protein belongs to the spermidine/spermine synthase family. As to quaternary structure, homodimer or homotetramer.

The protein localises to the cytoplasm. It catalyses the reaction S-adenosyl 3-(methylsulfanyl)propylamine + putrescine = S-methyl-5'-thioadenosine + spermidine + H(+). It participates in amine and polyamine biosynthesis; spermidine biosynthesis; spermidine from putrescine: step 1/1. Its function is as follows. Catalyzes the irreversible transfer of a propylamine group from the amino donor S-adenosylmethioninamine (decarboxy-AdoMet) to putrescine (1,4-diaminobutane) to yield spermidine. This is Polyamine aminopropyltransferase from Helicobacter pylori (strain G27).